The primary structure comprises 230 residues: Orotidine 5'-phosphate decarboxylase (230 aa).

Residues D11, K34, 61–70 (DLKLHDIPNT), T117, R179, Q188, G208, and R209 each bind substrate. Residue K63 is the Proton donor of the active site.

It belongs to the OMP decarboxylase family. Type 1 subfamily. In terms of assembly, homodimer.

The enzyme catalyses orotidine 5'-phosphate + H(+) = UMP + CO2. It functions in the pathway pyrimidine metabolism; UMP biosynthesis via de novo pathway; UMP from orotate: step 2/2. Functionally, catalyzes the decarboxylation of orotidine 5'-monophosphate (OMP) to uridine 5'-monophosphate (UMP). In Streptococcus uberis (strain ATCC BAA-854 / 0140J), this protein is Orotidine 5'-phosphate decarboxylase.